The following is a 218-amino-acid chain: Adenylate kinase (218 aa).

10–15 is a binding site for ATP; it reads GAGKGT. Residues 30–59 form an NMP region; it reads STGDMIRETIKSGSVLGQELKKVLDAGELV. Residues threonine 31, arginine 36, 57–59, and glutamine 92 contribute to the AMP site; that span reads ELV. Positions 122–159 are LID; the sequence is GRRIHPASGRTYHTKFNPPKVADKDDVTGEPLITRTDD. ATP-binding positions include arginine 123 and 132-133; that span reads TY. AMP is bound by residues arginine 156 and arginine 167. Glutamine 202 lines the ATP pocket.

The protein belongs to the adenylate kinase family. In terms of assembly, monomer.

It localises to the cytoplasm. The catalysed reaction is AMP + ATP = 2 ADP. It participates in purine metabolism; AMP biosynthesis via salvage pathway; AMP from ADP: step 1/1. Functionally, catalyzes the reversible transfer of the terminal phosphate group between ATP and AMP. Plays an important role in cellular energy homeostasis and in adenine nucleotide metabolism. This is Adenylate kinase from Francisella tularensis subsp. holarctica (strain LVS).